The following is a 559-amino-acid chain: SH3 domain-binding protein 2 (559 aa).

The region spanning 26-130 (GVAKAGYLHK…WMAFVRREIG (105 aa)) is the PH domain. Residues 164-449 (LSSYPMDNED…EDSDEDYEKV (286 aa)) are disordered. A compositionally biased stretch (acidic residues) spans 170 to 184 (DNEDYEHEDEDDSYL). Tyr-174 and Tyr-183 each carry phosphotyrosine; by SYK. Positions 201-210 (PPAYPPPPVP) match the SH3-binding motif. 2 stretches are compositionally biased toward pro residues: residues 202 to 213 (PAYPPPPVPVPR) and 233 to 242 (PLLPPPPPKR). Residues 252-265 (EDAKDALGLRRVEP) are compositionally biased toward basic and acidic residues. Phosphoserine is present on Ser-277. Low complexity predominate over residues 313–327 (TSSVSSSTTMAVATS). Residues 360–371 (KIAEEPSPREAA) show a composition bias toward basic and acidic residues. Residues 375-386 (PVPPVAPRPPVQ) show a composition bias toward pro residues. A phosphoserine mark is found at Ser-414 and Ser-425. A compositionally biased stretch (acidic residues) spans 437–446 (TGEEDSDEDY). Tyr-446 is modified (phosphotyrosine; by SYK). Residues 455–553 (VFVNTTESCE…HQSLLLRHPY (99 aa)) form the SH2 domain.

Phosphorylated. Phosphorylation at Tyr-446 may stimulate the activity of the LYN kinase.

Functionally, binds differentially to the SH3 domains of certain proteins of signal transduction pathways. Binds to phosphatidylinositols; linking the hemopoietic tyrosine kinase fes to the cytoplasmic membrane in a phosphorylation dependent mechanism. This Mus musculus (Mouse) protein is SH3 domain-binding protein 2 (Sh3bp2).